The sequence spans 111 residues: uncharacterized protein (111 aa).

To M.tuberculosis Rv1271c.

This is an uncharacterized protein from Mycobacterium bovis (strain ATCC BAA-935 / AF2122/97).